The sequence spans 333 residues: Fructose-1,6-bisphosphatase class 1 (333 aa).

4 residues coordinate Mg(2+): Glu89, Asp112, Leu114, and Asp115. Substrate is bound by residues 115–118 (DGSS), Asn208, Tyr241, and Lys271. A Mg(2+)-binding site is contributed by Glu277.

Belongs to the FBPase class 1 family. In terms of assembly, homotetramer. Mg(2+) is required as a cofactor.

It localises to the cytoplasm. It carries out the reaction beta-D-fructose 1,6-bisphosphate + H2O = beta-D-fructose 6-phosphate + phosphate. Its pathway is carbohydrate biosynthesis; gluconeogenesis. The chain is Fructose-1,6-bisphosphatase class 1 from Haemophilus influenzae (strain ATCC 51907 / DSM 11121 / KW20 / Rd).